The primary structure comprises 258 residues: Ribonuclease HII (258 aa).

Positions M1–P20 are disordered. Over residues P10–P20 the composition is skewed to basic residues. In terms of domain architecture, RNase H type-2 spans W48–A236. Residues D54, E55, and D145 each coordinate a divalent metal cation.

The protein belongs to the RNase HII family. It depends on Mn(2+) as a cofactor. Mg(2+) is required as a cofactor.

It localises to the cytoplasm. The catalysed reaction is Endonucleolytic cleavage to 5'-phosphomonoester.. In terms of biological role, endonuclease that specifically degrades the RNA of RNA-DNA hybrids. The polypeptide is Ribonuclease HII (Nitrobacter winogradskyi (strain ATCC 25391 / DSM 10237 / CIP 104748 / NCIMB 11846 / Nb-255)).